The following is a 229-amino-acid chain: Urease accessory protein UreF (229 aa).

This sequence belongs to the UreF family. As to quaternary structure, ureD, UreF and UreG form a complex that acts as a GTP-hydrolysis-dependent molecular chaperone, activating the urease apoprotein by helping to assemble the nickel containing metallocenter of UreC. The UreE protein probably delivers the nickel.

The protein localises to the cytoplasm. Functionally, required for maturation of urease via the functional incorporation of the urease nickel metallocenter. In Methylobacterium radiotolerans (strain ATCC 27329 / DSM 1819 / JCM 2831 / NBRC 15690 / NCIMB 10815 / 0-1), this protein is Urease accessory protein UreF.